The primary structure comprises 174 residues: Type II restriction enzyme Bsp6I (174 aa).

It catalyses the reaction Endonucleolytic cleavage of DNA to give specific double-stranded fragments with terminal 5'-phosphates.. A P subtype restriction enzyme that recognizes the double-stranded sequence 5'-GCNGC-3' and cleaves after C-2. This chain is Type II restriction enzyme Bsp6I, found in Bacillus sp. (strain RFL6).